The chain runs to 685 residues: Mannan-binding lectin serine protease 2 (685 aa).

Residues 1–19 (MRLLIFLGLLWSLVATLLG) form the signal peptide. Positions 20–137 (SKWPEPVFGR…TGFEAFYAAE (118 aa)) constitute a CUB 1 domain. Ca(2+) contacts are provided by glutamate 67 and aspartate 75. An intrachain disulfide couples cysteine 72 to cysteine 90. The N-linked (GlcNAc...) asparagine glycan is linked to asparagine 103. The Ca(2+) site is built by aspartate 120, serine 122, asparagine 123, aspartate 138, and glutamate 141. Residues 138 to 181 (DVDECRVSLGDSVPCDHYCHNYLGGYYCSCRAGYVLHQNKHTCS) form the EGF-like; calcium-binding domain. Intrachain disulfides connect cysteine 142–cysteine 156, cysteine 152–cysteine 165, cysteine 167–cysteine 180, cysteine 184–cysteine 211, and cysteine 241–cysteine 259. Residues asparagine 158 and glycine 162 each contribute to the Ca(2+) site. A (3R)-3-hydroxyasparagine modification is found at asparagine 158. The CUB 2 domain occupies 184-296 (CSGQVFTGRS…TGWKIHYTST (113 aa)). Residues asparagine 285 and asparagine 308 are each glycosylated (N-linked (GlcNAc...) asparagine). 2 consecutive Sushi domains span residues 298–363 (RPCP…ECSI) and 364–431 (IDCG…VCEP). 7 disulfides stabilise this stretch: cysteine 300–cysteine 348, cysteine 328–cysteine 361, cysteine 366–cysteine 411, cysteine 396–cysteine 429, cysteine 433–cysteine 552, cysteine 598–cysteine 617, and cysteine 628–cysteine 659. The region spanning 444-683 (IVGGQPAKPG…YIPWIENIIS (240 aa)) is the Peptidase S1 domain. Active-site charge relay system residues include histidine 483 and aspartate 532. Residue asparagine 545 is glycosylated (N-linked (GlcNAc...) asparagine). The Charge relay system role is filled by serine 632. Asparagine 641 carries an N-linked (GlcNAc...) asparagine glycan.

This sequence belongs to the peptidase S1 family. As to quaternary structure, homodimer; disulfide-linked. Binds MBL2. Isoform 2 binds to MASP1. Binds SERPING1. In terms of processing, the iron and 2-oxoglutarate dependent 3-hydroxylation of aspartate and asparagine is (R) stereospecific within EGF domains. Plasma.

Its subcellular location is the secreted. The catalysed reaction is Selective cleavage after Arg-223 in complement component C2 (-Ser-Leu-Gly-Arg-|-Lys-Ile-Gln-Ile) and after Arg-76 in complement component C4 (-Gly-Leu-Gln-Arg-|-Ala-Leu-Glu-Ile).. Serum protease that plays an important role in the activation of the complement system via mannose-binding lectin. After activation by auto-catalytic cleavage it cleaves C2 and C4, leading to their activation and to the formation of C3 convertase. This is Mannan-binding lectin serine protease 2 (Masp2) from Mus musculus (Mouse).